A 485-amino-acid polypeptide reads, in one-letter code: Otoconin-90 (485 aa).

A signal peptide spans 1–17 (MIMLLMVGMLMAPCVGA). N-linked (GlcNAc...) asparagine glycosylation occurs at N37. A phospholipase A2-like 1 region spans residues 75-189 (LLQFVNSMRC…SLNFLDASFC (115 aa)). 7 disulfide bridges follow: C84–C144, C98–C189, C100–C116, C115–C171, C122–C164, C131–C157, and C151–C162. N178 and N288 each carry an N-linked (GlcNAc...) asparagine glycan. 2 phospholipase A2-like regions span residues 315-371 (MLQL…QVGC) and 383-435 (CEDH…PVSC). N417 is a glycosylation site (N-linked (GlcNAc...) asparagine). The tract at residues 444–485 (LASSVDSSSEENSEEAPPQMERLRRFLEKPPGPLGARPLGGK) is disordered.

This sequence belongs to the phospholipase A2 family. As to quaternary structure, interacts with OTOL1. In the embryo, highly expressed in the developing otocyst with weak expression in the brain. Also expressed in nonsensory epithelia of both the vestibular and cochlear portions of the developing inner ear. Not expressed in adult or embryonic macular sensory epithelia.

The protein localises to the secreted. Major protein of the otoconia, a calcium carbonate structure in the saccule and utricle of the ear. Together with OTOL1, acts as a scaffold for otoconia biomineralization: sequesters calcium and forms interconnecting fibrils between otoconia that are incorporated into the calcium crystal structure. Together with OTOL1, modulates calcite crystal morphology and growth kinetics. It is unlikely that this protein has phospholipase A2 activity. The polypeptide is Otoconin-90 (Mus musculus (Mouse)).